Consider the following 1018-residue polypeptide: Integrator complex subunit 5 (1018 aa).

Residues 1–26 (MSALCDPPGAPGPPGPAPATHGPAPL) are disordered. Position 2 is an N-acetylserine (Ser-2). Positions 8–17 (PGAPGPPGPA) are enriched in pro residues. Residue Ser-278 is modified to Phosphoserine. Helical transmembrane passes span 533–553 (LATQLYAGLVVSLSGLLPLAF), 855–875 (LLFELLKLVAAAPPALCYCSV), and 929–949 (VFSQLAPFEVRLLLLSVWGFL).

Belongs to the Integrator subunit 5 family. In terms of assembly, component of the Integrator complex, composed of core subunits INTS1, INTS2, INTS3, INTS4, INTS5, INTS6, INTS7, INTS8, INTS9/RC74, INTS10, INTS11/CPSF3L, INTS12, INTS13, INTS14 and INTS15. The core complex associates with protein phosphatase 2A subunits PPP2CA and PPP2R1A, to form the Integrator-PP2A (INTAC) complex.

It localises to the nucleus. The protein resides in the cytoplasm. It is found in the nucleus membrane. Functionally, component of the integrator complex, a multiprotein complex that terminates RNA polymerase II (Pol II) transcription in the promoter-proximal region of genes. The integrator complex provides a quality checkpoint during transcription elongation by driving premature transcription termination of transcripts that are unfavorably configured for transcriptional elongation: the complex terminates transcription by (1) catalyzing dephosphorylation of the C-terminal domain (CTD) of Pol II subunit POLR2A/RPB1 and SUPT5H/SPT5, (2) degrading the exiting nascent RNA transcript via endonuclease activity and (3) promoting the release of Pol II from bound DNA. The integrator complex is also involved in terminating the synthesis of non-coding Pol II transcripts, such as enhancer RNAs (eRNAs), small nuclear RNAs (snRNAs), telomerase RNAs and long non-coding RNAs (lncRNAs). Mediates recruitment of cytoplasmic dynein to the nuclear envelope, probably as component of the integrator complex. The chain is Integrator complex subunit 5 (Ints5) from Mus musculus (Mouse).